The sequence spans 191 residues: Ribonuclease HII (191 aa).

The RNase H type-2 domain maps to 16-191 (INLIGIDEAG…KLHRKSFKLL (176 aa)). A divalent metal cation is bound by residues aspartate 22, glutamate 23, and aspartate 110.

Belongs to the RNase HII family. The cofactor is Mn(2+). Mg(2+) serves as cofactor.

The protein resides in the cytoplasm. The catalysed reaction is Endonucleolytic cleavage to 5'-phosphomonoester.. Its function is as follows. Endonuclease that specifically degrades the RNA of RNA-DNA hybrids. The protein is Ribonuclease HII of Campylobacter jejuni subsp. jejuni serotype O:6 (strain 81116 / NCTC 11828).